The primary structure comprises 414 residues: L-cysteine:1D-myo-inositol 2-amino-2-deoxy-alpha-D-glucopyranoside ligase (414 aa).

Zn(2+) is bound at residue Cys-44. L-cysteinyl-5'-AMP is bound by residues Cys-44–Thr-47, Thr-59, and Asn-82–Thr-84. Residues Ile-46–His-56 carry the 'HIGH' region motif. The short motif at Glu-188–Pro-193 is the 'ERGGDP' region element. Trp-228 provides a ligand contact to L-cysteinyl-5'-AMP. Cys-232 contacts Zn(2+). Gly-250 to Asp-252 is a binding site for L-cysteinyl-5'-AMP. Residue His-257 participates in Zn(2+) binding. Position 284 (Ile-284) interacts with L-cysteinyl-5'-AMP. The 'KMSKS' region signature appears at Lys-290–Ser-294.

Belongs to the class-I aminoacyl-tRNA synthetase family. MshC subfamily. As to quaternary structure, monomer. The cofactor is Zn(2+).

The catalysed reaction is 1D-myo-inositol 2-amino-2-deoxy-alpha-D-glucopyranoside + L-cysteine + ATP = 1D-myo-inositol 2-(L-cysteinylamino)-2-deoxy-alpha-D-glucopyranoside + AMP + diphosphate + H(+). Its function is as follows. Catalyzes the ATP-dependent condensation of GlcN-Ins and L-cysteine to form L-Cys-GlcN-Ins. The protein is L-cysteine:1D-myo-inositol 2-amino-2-deoxy-alpha-D-glucopyranoside ligase of Corynebacterium aurimucosum (strain ATCC 700975 / DSM 44827 / CIP 107346 / CN-1) (Corynebacterium nigricans).